The sequence spans 219 residues: MLILKGTKTVDLSKDELTEIIGQFDRVHIDLGTGDGRNIYKLAINDQNTFYIGIDPVKENLFDISKKIIKKPSKGGLSNVVFVIAAAESLPFELKNIADSISILFPWGTLLEYVIKPNRDILSNVADLAKKEAHFEFVTTYSDSYEEAEIKKRGLPLLSKAYFLSEQYKAELSNSGFRIDDVKELDNEYVKQFNSLWAKRLAFGRKRSFFRVSGHVSKH.

Residues Gly32, Asn38, Asp55, 87–88, 104–109, and 195–197 contribute to the S-adenosyl-L-methionine site; these read AE, LFPWGT, and SLW.

The protein belongs to the methyltransferase superfamily. Kanamycin-apramycin resistance family.

It carries out the reaction adenosine(1408) in 16S rRNA + S-adenosyl-L-methionine = N(1)-methyladenosine(1408) in 16S rRNA + S-adenosyl-L-homocysteine + H(+). Functionally, specifically methylates the N(1) position of adenine 1408 in 16S rRNA. Confers resistance to various aminoglycosides, including kanamycin, neomycin, apramycin, ribostamycin and gentamicin. Methylates only fully assembled 30S subunits. The sequence is that of 16S rRNA (adenine(1408)-N(1))-methyltransferase (npmA) from Escherichia coli.